We begin with the raw amino-acid sequence, 379 residues long: Sulfate adenylyltransferase (379 aa).

The protein belongs to the sulfate adenylyltransferase family.

It catalyses the reaction sulfate + ATP + H(+) = adenosine 5'-phosphosulfate + diphosphate. Its pathway is sulfur metabolism; hydrogen sulfide biosynthesis; sulfite from sulfate: step 1/3. In Thermococcus onnurineus (strain NA1), this protein is Sulfate adenylyltransferase.